A 378-amino-acid polypeptide reads, in one-letter code: Packaging protein 3 (378 aa).

2 disordered regions span residues 1 to 73 (MHPV…EGPV) and 355 to 378 (SRPP…DDFI). Residues 1–178 (MHPVLQSVRN…AFGEELRNTC (178 aa)) form an interaction with packaging protein 1 region. Low complexity-rich tracts occupy residues 16–35 (GGPH…SVRR) and 49–58 (PGAGATPTAG). A Phosphoserine; by host modification is found at Ser-362. Over residues 363–378 (FADEGPSESDDEDDFI) the composition is skewed to acidic residues.

It belongs to the adenoviridae packaging protein 3 family. Part of the genome packaging complex composed of packaging proteins 1, 2 and 3; this complex specifically binds to the packaging sequence on the left end of viral genomic DNA and performs packaging of the viral genome. Interacts with hexon-linking protein IIIa; this interaction is required to promote correct genome packaging. Cleaved at different sites by the viral protease during virion maturation.

The protein resides in the host nucleus. In terms of biological role, involved in viral genome packaging through its interaction with packaging proteins 1 and 2. After proteolytic cleavage by adenovirus protease, L1 52/55k protein is removed from the capsid during viral maturation. This chain is Packaging protein 3, found in Galliformes (FAdV-1).